Here is a 321-residue protein sequence, read N- to C-terminus: Probable protein phosphatase methylesterase 1 (321 aa).

Catalysis depends on residues S170, D195, and H307.

The protein belongs to the AB hydrolase superfamily.

It carries out the reaction [phosphatase 2A protein]-C-terminal L-leucine methyl ester + H2O = [phosphatase 2A protein]-C-terminal L-leucine + methanol + H(+). Its function is as follows. Demethylates proteins that have been reversibly carboxymethylated. This is Probable protein phosphatase methylesterase 1 (ppme1) from Dictyostelium discoideum (Social amoeba).